Here is a 283-residue protein sequence, read N- to C-terminus: Extensin (283 aa).

The signal sequence occupies residues 1 to 24; it reads MMGGKAALLLALVAVTLAVVEIQA. Residues 27–283 form a disordered region; the sequence is GYGYGGGYPT…PPPPPPPPYY (257 aa). The span at 36-45 shows a compositional bias: pro residues; it reads TPTPKPPAKG. Residues 46 to 69 show a composition bias toward basic and acidic residues; sequence PKPEKPPTKGHGHKPEKPPKEHKP. 2 stretches are compositionally biased toward pro residues: residues 70 to 264 and 272 to 283; these read TPPT…PTYT and SSPPPPPPPPYY.

Hydroxylated on proline residues in the S-P-P-P-P repeat. Post-translationally, O-glycosylated on hydroxyprolines.

It localises to the secreted. The protein resides in the primary cell wall. Its function is as follows. Structural component in primary cell wall. The protein is Extensin (HRGP) of Sorghum bicolor (Sorghum).